The following is a 278-amino-acid chain: Tryptophan synthase alpha chain (278 aa).

Residues E50 and D61 each act as proton acceptor in the active site.

It belongs to the TrpA family. In terms of assembly, tetramer of two alpha and two beta chains.

The enzyme catalyses (1S,2R)-1-C-(indol-3-yl)glycerol 3-phosphate + L-serine = D-glyceraldehyde 3-phosphate + L-tryptophan + H2O. The protein operates within amino-acid biosynthesis; L-tryptophan biosynthesis; L-tryptophan from chorismate: step 5/5. Its function is as follows. The alpha subunit is responsible for the aldol cleavage of indoleglycerol phosphate to indole and glyceraldehyde 3-phosphate. The chain is Tryptophan synthase alpha chain from Nitrobacter hamburgensis (strain DSM 10229 / NCIMB 13809 / X14).